Reading from the N-terminus, the 426-residue chain is Histidine--tRNA ligase (426 aa).

This sequence belongs to the class-II aminoacyl-tRNA synthetase family. As to quaternary structure, homodimer.

It localises to the cytoplasm. The enzyme catalyses tRNA(His) + L-histidine + ATP = L-histidyl-tRNA(His) + AMP + diphosphate + H(+). The chain is Histidine--tRNA ligase from Shewanella baltica (strain OS223).